The primary structure comprises 235 residues: Purine nucleoside phosphorylase DeoD-type (235 aa).

His-4 lines the a purine D-ribonucleoside pocket. Phosphate contacts are provided by residues Gly-20, Arg-24, Arg-43, and 87-90 (RVGT). A purine D-ribonucleoside is bound by residues Glu-162, 179–181 (EME), and 203–204 (SD). The Proton donor role is filled by Asp-204.

It belongs to the PNP/UDP phosphorylase family. In terms of assembly, homohexamer; trimer of homodimers.

The enzyme catalyses a purine D-ribonucleoside + phosphate = a purine nucleobase + alpha-D-ribose 1-phosphate. The catalysed reaction is a purine 2'-deoxy-D-ribonucleoside + phosphate = a purine nucleobase + 2-deoxy-alpha-D-ribose 1-phosphate. Its function is as follows. Catalyzes the reversible phosphorolytic breakdown of the N-glycosidic bond in the beta-(deoxy)ribonucleoside molecules, with the formation of the corresponding free purine bases and pentose-1-phosphate. This chain is Purine nucleoside phosphorylase DeoD-type, found in Bacillus cereus (strain ZK / E33L).